The following is an 816-amino-acid chain: Microbial collagenase (816 aa).

Positions 1-27 (MSHIRFFPRHRLALACMLASVSSFSFA) are cleaved as a signal peptide. H435 is a Zn(2+) binding site. Residue E436 is part of the active site. H439 provides a ligand contact to Zn(2+).

The protein belongs to the peptidase M9A family. Zn(2+) is required as a cofactor.

Its subcellular location is the secreted. The catalysed reaction is Digestion of native collagen in the triple helical region at Xaa-|-Gly bonds. With synthetic peptides, a preference is shown for Gly at P3 and P1', Pro and Ala at P2 and P2', and hydroxyproline, Ala or Arg at P3'.. Possesses gelatinolytic activity. Can cause weak haemolysis on blood agar. This is Microbial collagenase (prt) from Vibrio parahaemolyticus serotype O3:K6 (strain RIMD 2210633).